The chain runs to 247 residues: Isoprenyl transferase (247 aa).

Residue D18 is part of the active site. D18 is a binding site for Mg(2+). Substrate is bound by residues 19-22 (GNGR), W23, R31, H35, and 63-65 (SSE). Catalysis depends on N66, which acts as the Proton acceptor. Substrate contacts are provided by residues W67, R69, R186, and 192–194 (RLS). E205 contacts Mg(2+).

It belongs to the UPP synthase family. As to quaternary structure, homodimer. It depends on Mg(2+) as a cofactor.

Functionally, catalyzes the condensation of isopentenyl diphosphate (IPP) with allylic pyrophosphates generating different type of terpenoids. The polypeptide is Isoprenyl transferase (Agrobacterium fabrum (strain C58 / ATCC 33970) (Agrobacterium tumefaciens (strain C58))).